The sequence spans 157 residues: 2-C-methyl-D-erythritol 2,4-cyclodiphosphate synthase (157 aa).

The a divalent metal cation site is built by D8 and H10. Residues 8 to 10 (DVH) and 34 to 35 (HS) contribute to the 4-CDP-2-C-methyl-D-erythritol 2-phosphate site. Residue H42 coordinates a divalent metal cation. Residues 56–58 (DIG), 61–65 (FPDTD), 100–106 (AQAPKMA), 132–135 (TTTE), F139, and R142 each bind 4-CDP-2-C-methyl-D-erythritol 2-phosphate.

The protein belongs to the IspF family. Homotrimer. A divalent metal cation serves as cofactor.

The catalysed reaction is 4-CDP-2-C-methyl-D-erythritol 2-phosphate = 2-C-methyl-D-erythritol 2,4-cyclic diphosphate + CMP. The protein operates within isoprenoid biosynthesis; isopentenyl diphosphate biosynthesis via DXP pathway; isopentenyl diphosphate from 1-deoxy-D-xylulose 5-phosphate: step 4/6. In terms of biological role, involved in the biosynthesis of isopentenyl diphosphate (IPP) and dimethylallyl diphosphate (DMAPP), two major building blocks of isoprenoid compounds. Catalyzes the conversion of 4-diphosphocytidyl-2-C-methyl-D-erythritol 2-phosphate (CDP-ME2P) to 2-C-methyl-D-erythritol 2,4-cyclodiphosphate (ME-CPP) with a corresponding release of cytidine 5-monophosphate (CMP). The polypeptide is 2-C-methyl-D-erythritol 2,4-cyclodiphosphate synthase (Pseudomonas paraeruginosa (strain DSM 24068 / PA7) (Pseudomonas aeruginosa (strain PA7))).